The sequence spans 516 residues: uncharacterized protein (516 aa).

The next 9 membrane-spanning stretches (helical) occupy residues 183–203, 261–281, 308–328, 329–349, 356–376, 379–399, 430–450, 461–481, and 492–512; these read SAADLPIWEAASGAVLVGDGV, VLKTTFGFLAFGLIVSATYII, VMNGFLACLVMLATGIGTALL, LDHQFALVASVYLALTLAYSF, LLDVTVIGALFTLRIVMGQVL, LAFSPWLFSFSVMFFISLALA, LGHGLASASASIVIMLLFLAL, PAWLYVAPLGVSIWLQRIWLL, and IVFALNDKTSWFIGALIASAF.

The protein localises to the cell membrane. Functionally, possible permease/transporter. This is an uncharacterized protein from Sinorhizobium fredii (strain NBRC 101917 / NGR234).